A 311-amino-acid polypeptide reads, in one-letter code: Ornithine carbamoyltransferase (311 aa).

Residues 59 to 62 (STRT), Q86, R110, and 137 to 140 (HPCQ) each bind carbamoyl phosphate. L-ornithine-binding positions include N168, D228, and 232-233 (SM). Carbamoyl phosphate-binding positions include 267–268 (CL) and R295.

It belongs to the aspartate/ornithine carbamoyltransferase superfamily. OTCase family.

Its subcellular location is the cytoplasm. It carries out the reaction carbamoyl phosphate + L-ornithine = L-citrulline + phosphate + H(+). The protein operates within amino-acid biosynthesis; L-arginine biosynthesis; L-arginine from L-ornithine and carbamoyl phosphate: step 1/3. In terms of biological role, reversibly catalyzes the transfer of the carbamoyl group from carbamoyl phosphate (CP) to the N(epsilon) atom of ornithine (ORN) to produce L-citrulline. The protein is Ornithine carbamoyltransferase of Caulobacter vibrioides (strain ATCC 19089 / CIP 103742 / CB 15) (Caulobacter crescentus).